Here is a 432-residue protein sequence, read N- to C-terminus: Trigger factor (432 aa).

The PPIase FKBP-type domain maps to 165–250 (GDFAKIDFEG…LKEIQVKAPQ (86 aa)).

It belongs to the FKBP-type PPIase family. Tig subfamily.

Its subcellular location is the cytoplasm. It carries out the reaction [protein]-peptidylproline (omega=180) = [protein]-peptidylproline (omega=0). Its function is as follows. Involved in protein export. Acts as a chaperone by maintaining the newly synthesized protein in an open conformation. Functions as a peptidyl-prolyl cis-trans isomerase. This chain is Trigger factor, found in Wolinella succinogenes (strain ATCC 29543 / DSM 1740 / CCUG 13145 / JCM 31913 / LMG 7466 / NCTC 11488 / FDC 602W) (Vibrio succinogenes).